The following is a 165-amino-acid chain: Transcription factor TCP16 (165 aa).

The span at 1–11 shows a compositional bias: polar residues; sequence MDSKNGINNSQ. Disordered regions lie at residues 1–21 and 146–165; these read MDSK…KDRH and GNAT…TTTV. Basic residues predominate over residues 12 to 21; the sequence is KARRTPKDRH. Positions 17-71 constitute a TCP domain; it reads PKDRHLKIGGRDRRIRIPPSVAPQLFRLTKELGFKTDGETVSWLLQNAEPAIFAA. Residues 148–165 are compositionally biased toward low complexity; it reads ATASDTTSAATTTATTTV.

In terms of tissue distribution, mostly in anther in young buds.

The protein localises to the nucleus. Required during early processes in pollen development. This is Transcription factor TCP16 (TCP16) from Arabidopsis thaliana (Mouse-ear cress).